We begin with the raw amino-acid sequence, 333 residues long: Anthranilate phosphoribosyltransferase (333 aa).

Residues glycine 80, 83 to 84, threonine 88, 90 to 93, 108 to 116, and serine 120 contribute to the 5-phospho-alpha-D-ribose 1-diphosphate site; these read GD, NLST, and KHGNRSASG. Residue glycine 80 coordinates anthranilate. Serine 92 is a binding site for Mg(2+). Residue asparagine 111 participates in anthranilate binding. Arginine 166 contacts anthranilate. Mg(2+) is bound by residues aspartate 224 and glutamate 225.

The protein belongs to the anthranilate phosphoribosyltransferase family. Homodimer. It depends on Mg(2+) as a cofactor.

The enzyme catalyses N-(5-phospho-beta-D-ribosyl)anthranilate + diphosphate = 5-phospho-alpha-D-ribose 1-diphosphate + anthranilate. Its pathway is amino-acid biosynthesis; L-tryptophan biosynthesis; L-tryptophan from chorismate: step 2/5. In terms of biological role, catalyzes the transfer of the phosphoribosyl group of 5-phosphorylribose-1-pyrophosphate (PRPP) to anthranilate to yield N-(5'-phosphoribosyl)-anthranilate (PRA). In Pyrobaculum arsenaticum (strain DSM 13514 / JCM 11321 / PZ6), this protein is Anthranilate phosphoribosyltransferase.